Reading from the N-terminus, the 428-residue chain is Histidinol dehydrogenase (428 aa).

3 residues coordinate substrate: Ser234, Gln256, and His259. Zn(2+)-binding residues include Gln256 and His259. Catalysis depends on proton acceptor residues Glu324 and His325. Substrate-binding residues include His325, Asp358, Glu412, and His417. Asp358 provides a ligand contact to Zn(2+). His417 serves as a coordination point for Zn(2+).

Belongs to the histidinol dehydrogenase family. Zn(2+) is required as a cofactor.

It carries out the reaction L-histidinol + 2 NAD(+) + H2O = L-histidine + 2 NADH + 3 H(+). It participates in amino-acid biosynthesis; L-histidine biosynthesis; L-histidine from 5-phospho-alpha-D-ribose 1-diphosphate: step 9/9. Its function is as follows. Catalyzes the sequential NAD-dependent oxidations of L-histidinol to L-histidinaldehyde and then to L-histidine. The sequence is that of Histidinol dehydrogenase from Pelagibacter ubique (strain HTCC1062).